Here is a 97-residue protein sequence, read N- to C-terminus: Co-chaperonin GroES (97 aa).

It belongs to the GroES chaperonin family. In terms of assembly, heptamer of 7 subunits arranged in a ring. Interacts with the chaperonin GroEL.

The protein localises to the cytoplasm. Functionally, together with the chaperonin GroEL, plays an essential role in assisting protein folding. The GroEL-GroES system forms a nano-cage that allows encapsulation of the non-native substrate proteins and provides a physical environment optimized to promote and accelerate protein folding. GroES binds to the apical surface of the GroEL ring, thereby capping the opening of the GroEL channel. This is Co-chaperonin GroES from Enterobacter sp. (strain 638).